Reading from the N-terminus, the 176-residue chain is Translation initiation factor IF-3 (176 aa).

This sequence belongs to the IF-3 family. In terms of assembly, monomer.

It localises to the cytoplasm. Its function is as follows. IF-3 binds to the 30S ribosomal subunit and shifts the equilibrium between 70S ribosomes and their 50S and 30S subunits in favor of the free subunits, thus enhancing the availability of 30S subunits on which protein synthesis initiation begins. The protein is Translation initiation factor IF-3 of Nitratidesulfovibrio vulgaris (strain ATCC 29579 / DSM 644 / CCUG 34227 / NCIMB 8303 / VKM B-1760 / Hildenborough) (Desulfovibrio vulgaris).